Reading from the N-terminus, the 500-residue chain is Maintenance of mitochondrial morphology protein 1 (500 aa).

Residues 1 to 42 lie on the Lumenal side of the membrane; that stretch reads MATQVATPLSPSYTSELIIVCHHVLQHSPTPLTPHSLSFTQG. The chain crosses the membrane as a helical span at residues 43–63; it reads FLLGQLSIALLIFFFIKFFIF. The Cytoplasmic portion of the chain corresponds to 64–500; that stretch reads GEPPSADDRS…PGALAPGTFR (437 aa). The 235-residue stretch at 141-375 folds into the SMP-LTD domain; it reads QPESLDWFNV…EPRFQQIVLP (235 aa). Low complexity-rich tracts occupy residues 283–294 and 302–316; these read SSSPPSTSTTTP and NSTTSSSTSPPHRPT. Disordered regions lie at residues 283 to 316 and 406 to 500; these read SSSPPSTSTTTPNPEHHRSNSTTSSSTSPPHRPT and EEEE…GTFR. Residues 406–415 are compositionally biased toward acidic residues; sequence EEEEEEEEDG. Positions 438 to 471 are enriched in basic and acidic residues; it reads EGAKLREAEIRAGVRKQERPGMSRAQTSREEGVR.

Belongs to the MMM1 family. Homodimer. Component of the ER-mitochondria encounter structure (ERMES) or MDM complex, composed of MMM1, MDM10, MDM12 and MDM34. An MMM1 homodimer associates with one molecule of MDM12 on each side in a pairwise head-to-tail manner, and the SMP-LTD domains of MMM1 and MDM12 generate a continuous hydrophobic tunnel for phospholipid trafficking.

Its subcellular location is the endoplasmic reticulum membrane. Functionally, component of the ERMES/MDM complex, which serves as a molecular tether to connect the endoplasmic reticulum (ER) and mitochondria. Components of this complex are involved in the control of mitochondrial shape and protein biogenesis, and function in nonvesicular lipid trafficking between the ER and mitochondria. The MDM12-MMM1 subcomplex functions in the major beta-barrel assembly pathway that is responsible for biogenesis of all outer membrane beta-barrel proteins, and acts in a late step after the SAM complex. The MDM10-MDM12-MMM1 subcomplex further acts in the TOM40-specific pathway after the action of the MDM12-MMM1 complex. Essential for establishing and maintaining the structure of mitochondria and maintenance of mtDNA nucleoids. The protein is Maintenance of mitochondrial morphology protein 1 of Phaeosphaeria nodorum (strain SN15 / ATCC MYA-4574 / FGSC 10173) (Glume blotch fungus).